The following is a 123-amino-acid chain: Integration host factor subunit alpha (123 aa).

The segment at 97-123 (NANGSAPSMSSSASAVDDDKSESASRT) is disordered. Positions 98–111 (ANGSAPSMSSSASA) are enriched in low complexity. Over residues 113–123 (DDDKSESASRT) the composition is skewed to basic and acidic residues.

Belongs to the bacterial histone-like protein family. In terms of assembly, heterodimer of an alpha and a beta chain.

This protein is one of the two subunits of integration host factor, a specific DNA-binding protein that functions in genetic recombination as well as in transcriptional and translational control. This Rhodopseudomonas palustris (strain BisB5) protein is Integration host factor subunit alpha.